Here is a 308-residue protein sequence, read N- to C-terminus: Ribonuclease Z (308 aa).

Zn(2+) contacts are provided by H63, H65, D67, H68, H141, D212, and H270. The Proton acceptor role is filled by D67.

This sequence belongs to the RNase Z family. Homodimer. Requires Zn(2+) as cofactor.

It catalyses the reaction Endonucleolytic cleavage of RNA, removing extra 3' nucleotides from tRNA precursor, generating 3' termini of tRNAs. A 3'-hydroxy group is left at the tRNA terminus and a 5'-phosphoryl group is left at the trailer molecule.. Zinc phosphodiesterase, which displays some tRNA 3'-processing endonuclease activity. Probably involved in tRNA maturation, by removing a 3'-trailer from precursor tRNA. The polypeptide is Ribonuclease Z (Pediococcus pentosaceus (strain ATCC 25745 / CCUG 21536 / LMG 10740 / 183-1w)).